Reading from the N-terminus, the 334-residue chain is Transposase for insertion sequence element IS1328 (334 aa).

The protein belongs to the transposase IS1111A/IS1328/IS1533 family.

Required for the transposition of the insertion element. This chain is Transposase for insertion sequence element IS1328, found in Yersinia enterocolitica.